Consider the following 337-residue polypeptide: G-protein coupled receptor 65 (337 aa).

At 1 to 5 the chain is on the extracellular side; the sequence is MNSTC. A glycan (N-linked (GlcNAc...) asparagine) is linked at Asn-2. 2 disulfides stabilise this stretch: Cys-5/Cys-160 and Cys-87/Cys-170. A helical membrane pass occupies residues 6–42; it reads IEEQHDLDHYLFPIVYIFVIIVSIPANIGSLCVSFLQ. Over 43 to 46 the chain is Cytoplasmic; that stretch reads AKKE. A helical membrane pass occupies residues 47–77; it reads SELGIYLFSLSLSDLLYALTLPLWIDYTWNK. Topologically, residues 78–82 are extracellular; the sequence is DNWTF. Asn-79 carries N-linked (GlcNAc...) asparagine glycosylation. Residues 83–118 form a helical membrane-spanning segment; sequence SPALCKGSAFLMYMNFYSSTAFLTCIAVDRYLAVVY. Residues 119-126 lie on the Cytoplasmic side of the membrane; sequence PLKFFFLR. Residues 127 to 153 traverse the membrane as a helical segment; it reads TRRFALMVSLSIWILETIFNAVMLWED. Residues 154-174 are Extracellular-facing; sequence ETVVEYCDAEKSNFTLCYDKY. Residues 154 to 174 form an extracellular loop 2 (ECL2) region; the sequence is ETVVEYCDAEKSNFTLCYDKY. Residue Asn-166 is glycosylated (N-linked (GlcNAc...) asparagine). The chain crosses the membrane as a helical span at residues 175–212; it reads PLEKWQINLNLFRTCTGYAIPLVTILICNRKVYQAVRH. The Cytoplasmic segment spans residues 213–216; sequence NKAT. Residues 217-252 form a helical membrane-spanning segment; that stretch reads ENKEKKRIIKLLVSITVTFVLCFTPFHVMLLIRCIL. Residues 253–264 are Extracellular-facing; it reads EHAVNFEDHSNS. The chain crosses the membrane as a helical span at residues 265–293; it reads GKRTYTMYRITVALTSLNCVADPILYCFV. Residues 294–337 are Cytoplasmic-facing; sequence TETGRYDMWNILKFCTGRCNTSQRQRKRILSVSTKDTMELEVLE.

This sequence belongs to the G-protein coupled receptor 1 family. In terms of tissue distribution, predominantly expressed in thymus, spleen, lymph nodes, small intestine, lung, placenta and peripheral blood leukocytes.

Its subcellular location is the cell membrane. The protein localises to the early endosome membrane. It localises to the late endosome membrane. Activated by a network of residues that connects an extracellular-facing cavity to Glu-142, a conserved charged residue buried in the transmembrane core of the receptor. Protonation likely drives conformational changes in extracellular loop 2 (ECL2), which stabilizes movement of transmembrane 3 (TM3) and a series of rearrangements that connect the extracellular-facing cavity to Glu-142, a residue only conserved in proton-sensing G-protein coupled receptors. Activated by BTB09089, a positive allosteric modulator. In terms of biological role, proton-sensing G-protein coupled receptor activated by extracellular pH, which is required to monitor pH changes and generate adaptive reactions. Activated by an optimal pH of 7.4. Ligand binding causes a conformation change that triggers signaling via guanine nucleotide-binding proteins (G proteins) and modulates the activity of downstream effectors, such as adenylate cyclase. GPR65 is mainly coupled to G(s) G proteins and mediates activation of adenylate cyclase activity. May also act as a receptor for the glycosphingolipid psychosine (PSY) and several related glycosphingolipids. Plays a role in immune response by maintaining lysosome function and regulating T-cell metabolism. Acts as a regulator of inflammation by mediating pH-sensing of extracellular acidification which takes place in inflamed tissues: activation regulates endo-lysosomal function of immune cells and T-cell metabolism. Constitutively active in endosomes and stimulates adenylate cyclase production from endosomes independently from extracellular pH changes. The protein is G-protein coupled receptor 65 of Homo sapiens (Human).